Consider the following 606-residue polypeptide: Chaperone protein DnaK (606 aa).

T174 is subject to Phosphothreonine; by autocatalysis. Residues 578 to 606 are disordered; it reads YTQAGPQGGTNPGGQGGTDGNVNTDYKVY. Over residues 583–596 the composition is skewed to gly residues; that stretch reads PQGGTNPGGQGGTD.

This sequence belongs to the heat shock protein 70 family.

Its function is as follows. Acts as a chaperone. In Caldicellulosiruptor saccharolyticus (strain ATCC 43494 / DSM 8903 / Tp8T 6331), this protein is Chaperone protein DnaK.